The following is a 176-amino-acid chain: Cystatin-related protein 2 (176 aa).

The N-terminal stretch at 1 to 26 (MYKTLCGTQLLLAIFVLFLNFSHATA) is a signal peptide. A propeptide spanning residues 27 to 30 (KGTR) is cleaved from the precursor. N-linked (GlcNAc...) asparagine glycosylation is present at asparagine 71. Cystine bridges form between cysteine 129/cysteine 139 and cysteine 153/cysteine 173.

It belongs to the cystatin family. As to expression, prostate.

The polypeptide is Cystatin-related protein 2 (Crp2) (Rattus norvegicus (Rat)).